The primary structure comprises 600 residues: Elongation factor 4 (600 aa).

One can recognise a tr-type G domain in the interval 6 to 188 (QFIRNFSIIA…QITKQIPSPK (183 aa)). Residues 18–23 (DHGKST) and 135–138 (NKID) contribute to the GTP site.

This sequence belongs to the TRAFAC class translation factor GTPase superfamily. Classic translation factor GTPase family. LepA subfamily.

The protein localises to the cell inner membrane. The enzyme catalyses GTP + H2O = GDP + phosphate + H(+). Required for accurate and efficient protein synthesis under certain stress conditions. May act as a fidelity factor of the translation reaction, by catalyzing a one-codon backward translocation of tRNAs on improperly translocated ribosomes. Back-translocation proceeds from a post-translocation (POST) complex to a pre-translocation (PRE) complex, thus giving elongation factor G a second chance to translocate the tRNAs correctly. Binds to ribosomes in a GTP-dependent manner. This chain is Elongation factor 4, found in Leptospira interrogans serogroup Icterohaemorrhagiae serovar copenhageni (strain Fiocruz L1-130).